Reading from the N-terminus, the 178-residue chain is ATP-dependent protease subunit HslV (178 aa).

Residue Thr7 is part of the active site. Na(+) contacts are provided by Gly162, Cys165, and Thr168.

Belongs to the peptidase T1B family. HslV subfamily. A double ring-shaped homohexamer of HslV is capped on each side by a ring-shaped HslU homohexamer. The assembly of the HslU/HslV complex is dependent on binding of ATP.

It is found in the cytoplasm. It carries out the reaction ATP-dependent cleavage of peptide bonds with broad specificity.. Its activity is regulated as follows. Allosterically activated by HslU binding. Functionally, protease subunit of a proteasome-like degradation complex believed to be a general protein degrading machinery. This is ATP-dependent protease subunit HslV from Burkholderia ambifaria (strain ATCC BAA-244 / DSM 16087 / CCUG 44356 / LMG 19182 / AMMD) (Burkholderia cepacia (strain AMMD)).